We begin with the raw amino-acid sequence, 69 residues long: Large ribosomal subunit protein bL31 (69 aa).

Cys-16, Cys-18, Cys-37, and Cys-40 together coordinate Zn(2+).

The protein belongs to the bacterial ribosomal protein bL31 family. Type A subfamily. Part of the 50S ribosomal subunit. Zn(2+) serves as cofactor.

Functionally, binds the 23S rRNA. In Buchnera aphidicola subsp. Baizongia pistaciae (strain Bp), this protein is Large ribosomal subunit protein bL31.